The chain runs to 212 residues: Protein-L-isoaspartate O-methyltransferase (212 aa).

Residue serine 56 is part of the active site.

This sequence belongs to the methyltransferase superfamily. L-isoaspartyl/D-aspartyl protein methyltransferase family.

It localises to the cytoplasm. It catalyses the reaction [protein]-L-isoaspartate + S-adenosyl-L-methionine = [protein]-L-isoaspartate alpha-methyl ester + S-adenosyl-L-homocysteine. Functionally, catalyzes the methyl esterification of L-isoaspartyl residues in peptides and proteins that result from spontaneous decomposition of normal L-aspartyl and L-asparaginyl residues. It plays a role in the repair and/or degradation of damaged proteins. The chain is Protein-L-isoaspartate O-methyltransferase from Myxococcus xanthus (strain DK1622).